The chain runs to 240 residues: MAAIKDENNDHLVQSDNPEHPSNLIPALCRNFYSHGWVTGTGGGASIKRDNHIFIAPSGVQKELIQPHDIFVLQYPTPKYPPSARQYIRKPVELKPSACTPLFLAAFDRGAGCCIHTHSQWAVLVTLLVEREKGPEGCFEISNIEQIKGIPRGKGKGMLGFFDTLKIPIIENTAFEEDLTSSLEEAMEKYPDTYAVLVRRHGIYVWGDDVAKAKTQCESLDYLFQLAVEMHKLGLPWVKS.

Cys99 lines the substrate pocket. The Zn(2+) site is built by His116 and His118. The Proton donor/acceptor role is filled by Glu145. His201 contacts Zn(2+).

It belongs to the aldolase class II family. MtnB subfamily. It depends on Zn(2+) as a cofactor.

The protein resides in the cytoplasm. It carries out the reaction 5-(methylsulfanyl)-D-ribulose 1-phosphate = 5-methylsulfanyl-2,3-dioxopentyl phosphate + H2O. It functions in the pathway amino-acid biosynthesis; L-methionine biosynthesis via salvage pathway; L-methionine from S-methyl-5-thio-alpha-D-ribose 1-phosphate: step 2/6. Catalyzes the dehydration of methylthioribulose-1-phosphate (MTRu-1-P) into 2,3-diketo-5-methylthiopentyl-1-phosphate (DK-MTP-1-P). In Ajellomyces capsulatus (strain G186AR / H82 / ATCC MYA-2454 / RMSCC 2432) (Darling's disease fungus), this protein is Methylthioribulose-1-phosphate dehydratase.